Here is an 873-residue protein sequence, read N- to C-terminus: Alanine--tRNA ligase (873 aa).

4 residues coordinate Zn(2+): His557, His561, Cys659, and His663.

This sequence belongs to the class-II aminoacyl-tRNA synthetase family. It depends on Zn(2+) as a cofactor.

It is found in the cytoplasm. It catalyses the reaction tRNA(Ala) + L-alanine + ATP = L-alanyl-tRNA(Ala) + AMP + diphosphate. In terms of biological role, catalyzes the attachment of alanine to tRNA(Ala) in a two-step reaction: alanine is first activated by ATP to form Ala-AMP and then transferred to the acceptor end of tRNA(Ala). Also edits incorrectly charged Ser-tRNA(Ala) and Gly-tRNA(Ala) via its editing domain. The sequence is that of Alanine--tRNA ligase from Nitrosococcus oceani (strain ATCC 19707 / BCRC 17464 / JCM 30415 / NCIMB 11848 / C-107).